A 689-amino-acid polypeptide reads, in one-letter code: Glycine--tRNA ligase beta subunit (689 aa).

It belongs to the class-II aminoacyl-tRNA synthetase family. As to quaternary structure, tetramer of two alpha and two beta subunits.

The protein resides in the cytoplasm. It catalyses the reaction tRNA(Gly) + glycine + ATP = glycyl-tRNA(Gly) + AMP + diphosphate. In Dictyoglomus turgidum (strain DSM 6724 / Z-1310), this protein is Glycine--tRNA ligase beta subunit.